The chain runs to 222 residues: Cytidylate kinase (222 aa).

9-17 (GPAGSGKTT) lines the ATP pocket.

The protein belongs to the cytidylate kinase family. Type 1 subfamily.

The protein resides in the cytoplasm. The catalysed reaction is CMP + ATP = CDP + ADP. It carries out the reaction dCMP + ATP = dCDP + ADP. This Thermosipho africanus (strain TCF52B) protein is Cytidylate kinase.